The chain runs to 211 residues: RNA chaperone ProQ (211 aa).

Residues 113–147 (RRAVEKANNPKANKKRSVYHSGNKSENKKSAGKKF) form a disordered region.

This sequence belongs to the ProQ family.

Its subcellular location is the cytoplasm. Functionally, RNA chaperone with significant RNA binding, RNA strand exchange and RNA duplexing activities. In Histophilus somni (strain 129Pt) (Haemophilus somnus), this protein is RNA chaperone ProQ.